A 375-amino-acid polypeptide reads, in one-letter code: Terpene cyclase braA (375 aa).

Mg(2+) contacts are provided by D116, N264, and S268. Residues 116-120 (DDEID) carry the D(D/E)XX(D/E) motif motif. Positions 264–272 (NDVLSLQKE) match the NSE motif motif. The WxxxxxRY motif motif lies at 348–355 (WSYSCERY). R354 and Y355 together coordinate (2E,6E)-farnesyl diphosphate.

The protein belongs to the terpene synthase family. As to quaternary structure, homodimer. The cofactor is Mg(2+).

It carries out the reaction (2E,6E)-farnesyl diphosphate + H2O = trichobrasilenol + diphosphate. The protein operates within secondary metabolite biosynthesis. Functionally, terpene cyclase; part of the gene cluster that mediates the biosynthesis of the brasilane terpene glycosides brasilane D and E. The biosynthesis starts with the activity of the terpene cyclase braA that converts farnesyl pyrophosphate into the sesquiterpene alcohol trichobrasilenol. Subsequently, trichobrasilenol is glycosylated by the O-glycosyltransferase braB putatively using UDP-GlcNAc as sugar donor to yield brasilane A. The latter then undergoes two rounds of oxidation performed by the cytochrome P450 monooxygenase braC. In the first round braC hydroxylates C-12 forming brasilane D, which serves as substrate in the second round to establish the epoxide at the bond between C-5 and C-10 and oxidize the alcohol at C-12 to an aldehyde leading to the final product brasilane E. This chain is Terpene cyclase braA, found in Annulohypoxylon truncatum (Hypoxylon truncatum).